Reading from the N-terminus, the 178-residue chain is CDP-archaeol synthase (178 aa).

5 helical membrane passes run 3–23 (LLLL…ANAV), 56–76 (FFGI…VILY), 91–111 (IILG…GSFI), 123–143 (APLL…YPLY), and 149–169 (LMVI…IIAY).

It belongs to the CDP-archaeol synthase family. Requires Mg(2+) as cofactor.

It localises to the cell membrane. The enzyme catalyses 2,3-bis-O-(geranylgeranyl)-sn-glycerol 1-phosphate + CTP + H(+) = CDP-2,3-bis-O-(geranylgeranyl)-sn-glycerol + diphosphate. The protein operates within membrane lipid metabolism; glycerophospholipid metabolism. Functionally, catalyzes the formation of CDP-2,3-bis-(O-geranylgeranyl)-sn-glycerol (CDP-archaeol) from 2,3-bis-(O-geranylgeranyl)-sn-glycerol 1-phosphate (DGGGP) and CTP. This reaction is the third ether-bond-formation step in the biosynthesis of archaeal membrane lipids. In Methanococcus maripaludis (strain C7 / ATCC BAA-1331), this protein is CDP-archaeol synthase.